The sequence spans 295 residues: Small ribosomal subunit protein uS2 (295 aa).

The disordered stretch occupies residues 242-295; that stretch reads APVEPTLARELAPEAPAPEAPAEEAPAAEAAPAAEAAPAAEAAPAEASSEEQAG. The segment covering 264–288 has biased composition (low complexity); sequence EEAPAAEAAPAAEAAPAAEAAPAEA.

Belongs to the universal ribosomal protein uS2 family.

The sequence is that of Small ribosomal subunit protein uS2 from Phenylobacterium zucineum (strain HLK1).